A 619-amino-acid chain; its full sequence is Probable galacturonosyltransferase 7 (619 aa).

Topologically, residues 1–19 are cytoplasmic; sequence MKGGGGGGGGGGGGKRRWK. A helical; Signal-anchor for type II membrane protein membrane pass occupies residues 20–40; sequence VLVIGVLVLVILSMLVPLAFL. At 41 to 619 the chain is on the lumenal side; that stretch reads LGLHNGFHSP…RFLSDCNVNP (579 aa). Asn-68, Asn-106, Asn-132, Asn-343, and Asn-421 each carry an N-linked (GlcNAc...) asparagine glycan. Residues 95 to 139 form a disordered region; that stretch reads KSDINVGSRDVNATSGTDSKKRGLPVSPTVVANPSPANKTKSEAS. The span at 124–139 shows a compositional bias: polar residues; sequence VVANPSPANKTKSEAS.

It belongs to the glycosyltransferase 8 family. As to expression, expressed in roots, inflorescences, flowers, siliques, leaves and stems.

The protein localises to the golgi apparatus membrane. It functions in the pathway glycan metabolism; pectin biosynthesis. In terms of biological role, may be involved in pectin biosynthesis. The chain is Probable galacturonosyltransferase 7 (GAUT7) from Arabidopsis thaliana (Mouse-ear cress).